Reading from the N-terminus, the 336-residue chain is Formimidoylglutamase (336 aa).

H129, D160, H162, D164, D257, and D259 together coordinate Mn(2+).

Belongs to the arginase family. Mn(2+) is required as a cofactor.

It catalyses the reaction N-formimidoyl-L-glutamate + H2O = formamide + L-glutamate. It participates in amino-acid degradation; L-histidine degradation into L-glutamate; L-glutamate from N-formimidoyl-L-glutamate (hydrolase route): step 1/1. Its function is as follows. Catalyzes the conversion of N-formimidoyl-L-glutamate to L-glutamate and formamide. The protein is Formimidoylglutamase of Vibrio vulnificus (strain CMCP6).